An 87-amino-acid chain; its full sequence is Acyl-CoA-binding protein (87 aa).

N-acetylserine is present on serine 2. An ACB domain is found at 2–87; sequence SQAEFDKAAE…VEELKKKYGI (86 aa). Position 8 is an N6-acetyllysine; alternate (lysine 8). Lysine 8 carries the N6-succinyllysine; alternate modification. Position 14 (lysine 14) interacts with an acyl-CoA. Lysine 17 is subject to N6-succinyllysine. Residue lysine 19 is modified to N6-acetyllysine. The residue at position 29 (tyrosine 29) is a Phosphotyrosine. An acyl-CoA is bound by residues 29–33, lysine 51, lysine 55, and tyrosine 74; that span reads YSHYK. N6-acetyllysine is present on lysine 51. An N6-acetyllysine; alternate modification is found at lysine 55. Lysine 55 is modified (N6-succinyllysine; alternate). Lysine 55 bears the N6-(2-hydroxyisobutyryl)lysine; alternate mark. The residue at position 55 (lysine 55) is an N6-malonyllysine; alternate. Lysine 77 carries the post-translational modification N6-acetyllysine; alternate. Position 77 is an N6-succinyllysine; alternate (lysine 77).

The protein belongs to the ACBP family. As to quaternary structure, monomer.

Its subcellular location is the endoplasmic reticulum. It localises to the golgi apparatus. Its function is as follows. Binds medium- and long-chain acyl-CoA esters with very high affinity and may function as an intracellular carrier of acyl-CoA esters. It is also able to displace diazepam from the benzodiazepine (BZD) recognition site located on the GABA type A receptor. It is therefore possible that this protein also acts as a neuropeptide to modulate the action of the GABA receptor. The polypeptide is Acyl-CoA-binding protein (DBI) (Bos taurus (Bovine)).